The primary structure comprises 269 residues: Putative 12-oxophytodienoate reductase-like protein 2A (269 aa).

FMN contacts are provided by residues 28 to 30 (PLT) and Gln103. 175 to 178 (HGAH) is a substrate binding site. Tyr180 serves as the catalytic Proton donor. Arg227 provides a ligand contact to FMN.

This sequence belongs to the NADH:flavin oxidoreductase/NADH oxidase family. It depends on FMN as a cofactor.

In terms of biological role, putative oxophytodienoate reductase that may be involved in the biosynthesis or metabolism of oxylipin signaling molecules. This is Putative 12-oxophytodienoate reductase-like protein 2A from Arabidopsis thaliana (Mouse-ear cress).